The primary structure comprises 432 residues: Enolase (432 aa).

A (2R)-2-phosphoglycerate-binding site is contributed by Q164. Catalysis depends on E206, which acts as the Proton donor. Positions 243, 289, and 316 each coordinate Mg(2+). The (2R)-2-phosphoglycerate site is built by K341, R370, S371, and K392. K341 acts as the Proton acceptor in catalysis.

The protein belongs to the enolase family. Mg(2+) is required as a cofactor.

It is found in the cytoplasm. It localises to the secreted. The protein localises to the cell surface. The enzyme catalyses (2R)-2-phosphoglycerate = phosphoenolpyruvate + H2O. Its pathway is carbohydrate degradation; glycolysis; pyruvate from D-glyceraldehyde 3-phosphate: step 4/5. Catalyzes the reversible conversion of 2-phosphoglycerate (2-PG) into phosphoenolpyruvate (PEP). It is essential for the degradation of carbohydrates via glycolysis. The polypeptide is Enolase (Borrelia duttonii (strain Ly)).